The chain runs to 513 residues: ATP synthase subunit alpha (513 aa).

169-176 (GDRQTGKT) lines the ATP pocket.

This sequence belongs to the ATPase alpha/beta chains family. In terms of assembly, F-type ATPases have 2 components, CF(1) - the catalytic core - and CF(0) - the membrane proton channel. CF(1) has five subunits: alpha(3), beta(3), gamma(1), delta(1), epsilon(1). CF(0) has three main subunits: a(1), b(2) and c(9-12). The alpha and beta chains form an alternating ring which encloses part of the gamma chain. CF(1) is attached to CF(0) by a central stalk formed by the gamma and epsilon chains, while a peripheral stalk is formed by the delta and b chains.

The protein resides in the cell inner membrane. It carries out the reaction ATP + H2O + 4 H(+)(in) = ADP + phosphate + 5 H(+)(out). Its function is as follows. Produces ATP from ADP in the presence of a proton gradient across the membrane. The alpha chain is a regulatory subunit. The polypeptide is ATP synthase subunit alpha (Actinobacillus succinogenes (strain ATCC 55618 / DSM 22257 / CCUG 43843 / 130Z)).